Consider the following 910-residue polypeptide: Dynein axonemal assembly factor 1 homolog (910 aa).

5 LRR repeats span residues 43–64 (GLKC…DHQS), 65–86 (QLRC…QHCK), 87–108 (QLDT…GSDI), 111–132 (VLNT…AELR), and 136–157 (FVSV…KVLA). The region spanning 171–209 (PVVNDIPSYRKTLILECKSLTYLDSRPVFDKDRACAEAW) is the LRRCT domain. Residues 217 to 230 (ERKEHQRWKKEEQR) are compositionally biased toward basic and acidic residues. Disordered regions lie at residues 217–275 (ERKE…GDFE), 297–332 (TKGD…DPTL), 344–399 (SRAC…GSIL), 620–642 (EQVP…PVDQ), 662–682 (QVEV…IPEE), and 855–910 (EELE…QGDH). Over residues 314–331 (STNSVDYITGSDSNSDPT) the composition is skewed to polar residues. Low complexity predominate over residues 380–389 (SLSDSSSSSS). Basic and acidic residues predominate over residues 620–633 (EQVPDEVEANDKAS). The segment covering 855-865 (EELEELNEEED) has biased composition (acidic residues). Positions 866-878 (PALKEAGDFKHDE) are enriched in basic and acidic residues.

Belongs to the DNAAF1 family.

It is found in the cell projection. The protein localises to the cilium. Its function is as follows. Cilium-specific protein required for cilia structures. This chain is Dynein axonemal assembly factor 1 homolog, found in Anopheles gambiae (African malaria mosquito).